A 129-amino-acid polypeptide reads, in one-letter code: METKNAKAIARKVSIAPRKARLVVDLIRGKNIAQAQAILTFTPKVAAPVILKLLNSAISNAVNNLKLNREQLYVKEVFVNEGLRLKRMFPRAKGSGDMIKKRTSHITLVITSSTNLQTSKEEEQSGSKN.

The protein belongs to the universal ribosomal protein uL22 family. As to quaternary structure, part of the 50S ribosomal subunit.

Its function is as follows. This protein binds specifically to 23S rRNA; its binding is stimulated by other ribosomal proteins, e.g. L4, L17, and L20. It is important during the early stages of 50S assembly. It makes multiple contacts with different domains of the 23S rRNA in the assembled 50S subunit and ribosome. The globular domain of the protein is located near the polypeptide exit tunnel on the outside of the subunit, while an extended beta-hairpin is found that lines the wall of the exit tunnel in the center of the 70S ribosome. This Phytoplasma sp. (strain STRAWB2) protein is Large ribosomal subunit protein uL22.